A 366-amino-acid chain; its full sequence is Melatonin receptor type 1A (366 aa).

The Extracellular segment spans residues 1 to 45 (MAGRLWGSPGGTPKGNGSSALLNVSQAAPGAGDGVRPRPSWLAAT). N-linked (GlcNAc...) asparagine glycans are attached at residues Asn-16 and Asn-23. A helical membrane pass occupies residues 46–66 (LASILIFTIVVDIVGNLLVVL). Residues 67-79 (SVYRNKKLRNAGN) are Cytoplasmic-facing. The chain crosses the membrane as a helical span at residues 80–100 (VFVVSLAVADLLVAVYPYPLA). The Extracellular portion of the chain corresponds to 101–118 (LASIVNNGWSLSSLHCQL). The cysteines at positions 116 and 193 are disulfide-linked. A helical membrane pass occupies residues 119–139 (SGFLMGLSVIGSVFSITGIAI). At 140-158 (NRYCCICHSLRYGKLYSGT) the chain is on the cytoplasmic side. Residues 159–179 (NSLCYVFLIWTLTLVAIVPNL) traverse the membrane as a helical segment. Residues 180 to 203 (CVGTLQYDPRIYSCTFTQSVSSAY) lie on the Extracellular side of the membrane. Residues 204–224 (TIAVVVFHFIVPMLVVVFCYL) form a helical membrane-spanning segment. The Cytoplasmic portion of the chain corresponds to 225–256 (RIWALVLQVRWKVKPDNKPKLKPQDFRNFVTM). A helical transmembrane segment spans residues 257-277 (FVVFVLFAICWAPLNFIGLVV). Residues 278–290 (ASDPASMAPRIPE) are Extracellular-facing. The helical transmembrane segment at 291-311 (WLFVASYYMAYFNSCLNAIIY) threads the bilayer. At 312 to 366 (GLLNQNFRQEYRKIIVSLCTTKMFFVDSSNHVADRIKRKPSPLIANHNLIKVDSV) the chain is on the cytoplasmic side.

It belongs to the G-protein coupled receptor 1 family.

Its subcellular location is the cell membrane. Its function is as follows. High affinity receptor for melatonin. Likely to mediate the reproductive and circadian actions of melatonin. The activity of this receptor is mediated by pertussis toxin sensitive G proteins that inhibit adenylate cyclase activity. Possibly involved in sleep induction, by melatonin activation of the potassium channel KCNMA1/BK and the dissociation of G-beta and G-gamma subunits, thereby decreasing synaptic transmission. The chain is Melatonin receptor type 1A (MTNR1A) from Ovis aries (Sheep).